A 559-amino-acid chain; its full sequence is Phosphatase and actin regulator 3 (559 aa).

The segment at 1 to 65 is disordered; the sequence is MAASEDGSGC…GIRTPPVRRN (65 aa). Residues 15–24 are compositionally biased toward polar residues; that stretch reads GRSQSDPSVL. Residues 25 to 35 are compositionally biased toward low complexity; the sequence is TDSSATSSADA. Phosphothreonine is present on T70. Residues 82 to 342 are disordered; the sequence is KKKNEKLKQT…VERGKEREEA (261 aa). The stretch at 93–118 is one RPEL 1 repeat; sequence SALEKKMAGRQGREELIKKGLLEMME. A compositionally biased stretch (basic and acidic residues) spans 95-113; that stretch reads LEKKMAGRQGREELIKKGL. Polar residues predominate over residues 134 to 151; it reads SVQSEPPTPKSETLTSED. Over residues 229 to 240 the composition is skewed to pro residues; the sequence is PSPPLLPTPPPK. A Phosphoserine modification is found at S230. Position 236 is a phosphothreonine (T236). Composition is skewed to polar residues over residues 248–262 and 270–281; these read NVTG…SSMK and GQLSTPTGSPHL. Over residues 293–342 the composition is skewed to basic and acidic residues; it reads VIEELHRALATKHRQDSFQGRESKGSPKKRLDVRLSRTSSVERGKEREEA. The stretch at 346-369 forms a coiled coil; it reads DGALENKRTAAKESEENKENLIIN. 3 RPEL repeats span residues 401–426, 439–464, and 477–502; these read ELLA…PRRT, MKLS…KQRN, and QRLT…IRFS. Residues 438 to 518 are required for PP1CA binding and inhibition of PP1 activity; that stretch reads EMKLSKRLSQ…KAQDYDRRAD (81 aa). Residues 450–486 adopt a coiled-coil conformation; sequence AVEELERRNILKQRNDQTEQEERREIKQRLTRKLNQR.

This sequence belongs to the phosphatase and actin regulator family. In terms of assembly, binds actin and PPP1CA; thus inhibiting the protein phosphatase 1 (PP1) activity. Abundantly expressed in brain. Also found in several tumors such as lung carcinomas, nervous tumors and HL-60 leukemia cells. Isoform 3 is the major form in U-937, GOTO and HL-60 leukemia cells.

It localises to the nucleus matrix. In Homo sapiens (Human), this protein is Phosphatase and actin regulator 3 (PHACTR3).